The sequence spans 177 residues: Ribosome maturation factor RimP (177 aa).

The protein belongs to the RimP family.

The protein localises to the cytoplasm. Its function is as follows. Required for maturation of 30S ribosomal subunits. The polypeptide is Ribosome maturation factor RimP (Methylibium petroleiphilum (strain ATCC BAA-1232 / LMG 22953 / PM1)).